A 329-amino-acid chain; its full sequence is MWGLKVLLLPVVSFALYPEEILDTHWELWKKTHRKQYNNKVDEISRRLIWEKNLKYISIHNLEASLGVHTYELAMNHLGDMTSEEVVQKMTGLKVPLSHSRSNDTLYIPEWEGRAPDSVDYRKKGYVTPVKNQGQCGSCWAFSSVGALEGQLKKKTGKLLNLSPQNLVDCVSENDGCGGGYMTNAFQYVQKNRGIDSEDAYPYVGQEESCMYNPTGKAAKCRGYREIPEGNEKALKRAVARVGPVSVAIDASLTSFQFYSKGVYYDESCNSDNLNHAVLAVGYGIQKGNKHWIIKNSWGENWGNKGYILMARNKNNACGIANLASFPKM.

An N-terminal signal peptide occupies residues Met1–Ala15. The propeptide at Leu16–Arg114 is activation peptide. Asn103 carries N-linked (GlcNAc...) asparagine glycosylation. Intrachain disulfides connect Cys136–Cys177, Cys170–Cys210, and Cys269–Cys318. Residue Cys139 is part of the active site. Residues His276 and Asn296 contribute to the active site.

The protein belongs to the peptidase C1 family. In terms of tissue distribution, predominantly expressed in osteoclasts (bones). Expressed in thyroid epithelial cells.

It localises to the lysosome. The protein localises to the secreted. Its subcellular location is the apical cell membrane. The catalysed reaction is Broad proteolytic activity. With small-molecule substrates and inhibitors, the major determinant of specificity is P2, which is preferably Leu, Met &gt; Phe, and not Arg.. Its function is as follows. Thiol protease involved in osteoclastic bone resorption and may participate partially in the disorder of bone remodeling. Displays potent endoprotease activity against fibrinogen at acid pH. May play an important role in extracellular matrix degradation. Involved in the release of thyroid hormone thyroxine (T4) by limited proteolysis of TG/thyroglobulin in the thyroid follicle lumen. This is Cathepsin K (CTSK) from Homo sapiens (Human).